The chain runs to 38 residues: Large ribosomal subunit protein bL36 (38 aa).

Belongs to the bacterial ribosomal protein bL36 family.

The polypeptide is Large ribosomal subunit protein bL36 (Methylacidiphilum infernorum (isolate V4) (Methylokorus infernorum (strain V4))).